A 426-amino-acid chain; its full sequence is Serine--tRNA ligase (426 aa).

233–235 (TAE) provides a ligand contact to L-serine. 264-266 (RSE) contacts ATP. An L-serine-binding site is contributed by glutamate 287. 351-354 (EISS) serves as a coordination point for ATP. Serine 387 contributes to the L-serine binding site.

Belongs to the class-II aminoacyl-tRNA synthetase family. Type-1 seryl-tRNA synthetase subfamily. In terms of assembly, homodimer. The tRNA molecule binds across the dimer.

It localises to the cytoplasm. The catalysed reaction is tRNA(Ser) + L-serine + ATP = L-seryl-tRNA(Ser) + AMP + diphosphate + H(+). The enzyme catalyses tRNA(Sec) + L-serine + ATP = L-seryl-tRNA(Sec) + AMP + diphosphate + H(+). Its pathway is aminoacyl-tRNA biosynthesis; selenocysteinyl-tRNA(Sec) biosynthesis; L-seryl-tRNA(Sec) from L-serine and tRNA(Sec): step 1/1. Its function is as follows. Catalyzes the attachment of serine to tRNA(Ser). Is also able to aminoacylate tRNA(Sec) with serine, to form the misacylated tRNA L-seryl-tRNA(Sec), which will be further converted into selenocysteinyl-tRNA(Sec). This is Serine--tRNA ligase from Pseudomonas putida (strain GB-1).